The chain runs to 198 residues: MQYPEPISKLIDSFMKLPGIGPKTAVRLAFFVLSMQEDVVLDFAKALVNAKRNLTYCSVCGHITDQDPCYICEDTRRDQSVICVVQDPKDVIAMEKMKEYNGLYHVLHGAISPMDGIGPEDIKIPDLLKRLQDDQVTEVILATNPNIEGEATAMYISRLLKPSGIKLSRIAHGLPVGGDLEYADEVTLSKALEGRREM.

A C4-type zinc finger spans residues Cys57–Cys72. In terms of domain architecture, Toprim spans Ser80–Pro175.

This sequence belongs to the RecR family.

In terms of biological role, may play a role in DNA repair. It seems to be involved in an RecBC-independent recombinational process of DNA repair. It may act with RecF and RecO. The protein is Recombination protein RecR of Bacillus pumilus (strain SAFR-032).